The primary structure comprises 113 residues: Integration host factor subunit alpha (113 aa).

The disordered stretch occupies residues 87 to 113 (NALNGEVSDETTEGADDDDDEEGEGDE). A compositionally biased stretch (acidic residues) spans 93-113 (VSDETTEGADDDDDEEGEGDE).

This sequence belongs to the bacterial histone-like protein family. In terms of assembly, heterodimer of an alpha and a beta chain.

Functionally, this protein is one of the two subunits of integration host factor, a specific DNA-binding protein that functions in genetic recombination as well as in transcriptional and translational control. The polypeptide is Integration host factor subunit alpha (Anaeromyxobacter dehalogenans (strain 2CP-1 / ATCC BAA-258)).